Consider the following 83-residue polypeptide: Small ribosomal subunit protein uS17c (83 aa).

This sequence belongs to the universal ribosomal protein uS17 family. In terms of assembly, part of the 30S ribosomal subunit.

The protein resides in the plastid. It localises to the chloroplast. One of the primary rRNA binding proteins, it binds specifically to the 5'-end of 16S ribosomal RNA. The polypeptide is Small ribosomal subunit protein uS17c (rps17) (Porphyra purpurea (Red seaweed)).